A 329-amino-acid chain; its full sequence is GTP 3',8-cyclase (329 aa).

One can recognise a Radical SAM core domain in the interval 1–229 (MNQVDYLRIS…EGYVRGNGPA (229 aa)). R8 serves as a coordination point for GTP. [4Fe-4S] cluster contacts are provided by C15 and C19. Residue Y21 coordinates S-adenosyl-L-methionine. C22 is a [4Fe-4S] cluster binding site. R60 lines the GTP pocket. An S-adenosyl-L-methionine-binding site is contributed by G64. T91 contacts GTP. S115 is a binding site for S-adenosyl-L-methionine. GTP is bound at residue K155. M189 lines the S-adenosyl-L-methionine pocket. C252 and C255 together coordinate [4Fe-4S] cluster. Residue 257–259 (RVR) coordinates GTP. C269 is a binding site for [4Fe-4S] cluster.

It belongs to the radical SAM superfamily. MoaA family. In terms of assembly, monomer and homodimer. [4Fe-4S] cluster is required as a cofactor.

The catalysed reaction is GTP + AH2 + S-adenosyl-L-methionine = (8S)-3',8-cyclo-7,8-dihydroguanosine 5'-triphosphate + 5'-deoxyadenosine + L-methionine + A + H(+). The protein operates within cofactor biosynthesis; molybdopterin biosynthesis. Its function is as follows. Catalyzes the cyclization of GTP to (8S)-3',8-cyclo-7,8-dihydroguanosine 5'-triphosphate. In Cyanothece sp. (strain PCC 7425 / ATCC 29141), this protein is GTP 3',8-cyclase.